The following is a 272-amino-acid chain: Putative pyruvate, phosphate dikinase regulatory protein (272 aa).

Residue 151 to 158 participates in ADP binding; the sequence is GISRTSKT.

Belongs to the pyruvate, phosphate/water dikinase regulatory protein family. PDRP subfamily.

It catalyses the reaction N(tele)-phospho-L-histidyl/L-threonyl-[pyruvate, phosphate dikinase] + ADP = N(tele)-phospho-L-histidyl/O-phospho-L-threonyl-[pyruvate, phosphate dikinase] + AMP + H(+). The catalysed reaction is N(tele)-phospho-L-histidyl/O-phospho-L-threonyl-[pyruvate, phosphate dikinase] + phosphate + H(+) = N(tele)-phospho-L-histidyl/L-threonyl-[pyruvate, phosphate dikinase] + diphosphate. Bifunctional serine/threonine kinase and phosphorylase involved in the regulation of the pyruvate, phosphate dikinase (PPDK) by catalyzing its phosphorylation/dephosphorylation. This is Putative pyruvate, phosphate dikinase regulatory protein from Staphylococcus aureus (strain Mu3 / ATCC 700698).